The following is a 480-amino-acid chain: MKLEPLFDLDPNVTVRTRFAPSPTGYLHVGGARTALYSWLFAKHHHGEFVLRIEDTDLERSTPEATAAIIEGMEWLNLAWEHGPYFQTKRFTRYNQVIDQMIEQGLAYRCYCTKERLEELRHSQEANKEKPRYDRHCLHDHSHSPDEPHVVRFKNPQEGSVIFDDAVRGRIEISNSELDDLIIRRTDGSPTYNFCVVVDDWDMGITHVVRGEDHINNTPRQINILNALGAPIPTYAHVSMINGDDGQKLSKRHGAVSVMQYRDDGYLPEALVNYLVRLGWGHGDQEIFSREEMINLFELEHVSKSASAFNTEKLQWLNQHYMRELPADYVANHLAWQYRDLGIDTANGPALTDIVSMLAERSKTLREMALSSRYFFEEFETFDETAAKKHLKAAAVQPLEKVKEKLTALSVWDAHSTHEAIEQTAADLDVGMGKVGMPLRVAVTGAGQSPSMDVTLAAIGRERVLARIDKAIAFIKAKAA.

The 'HIGH' region signature appears at 21 to 31 (PSPTGYLHVGG). Zn(2+) contacts are provided by Cys-110, Cys-112, Cys-137, and His-139. The 'KMSKS' region signature appears at 248–252 (KLSKR). Lys-251 contributes to the ATP binding site.

It belongs to the class-I aminoacyl-tRNA synthetase family. Glutamate--tRNA ligase type 1 subfamily. Monomer. The cofactor is Zn(2+).

Its subcellular location is the cytoplasm. It carries out the reaction tRNA(Glu) + L-glutamate + ATP = L-glutamyl-tRNA(Glu) + AMP + diphosphate. Functionally, catalyzes the attachment of glutamate to tRNA(Glu) in a two-step reaction: glutamate is first activated by ATP to form Glu-AMP and then transferred to the acceptor end of tRNA(Glu). The chain is Glutamate--tRNA ligase from Actinobacillus succinogenes (strain ATCC 55618 / DSM 22257 / CCUG 43843 / 130Z).